We begin with the raw amino-acid sequence, 340 residues long: Protein-arginine kinase (340 aa).

Residues 21–242 enclose the Phosphagen kinase C-terminal domain; sequence VVLSSRIRLA…EQIIMQERVA (222 aa). ATP is bound by residues 24–28, His79, Arg113, 164–168, and 195–200; these read SSRIR, RASVM, and RGIYGE.

This sequence belongs to the ATP:guanido phosphotransferase family.

The catalysed reaction is L-arginyl-[protein] + ATP = N(omega)-phospho-L-arginyl-[protein] + ADP + H(+). Functionally, catalyzes the specific phosphorylation of arginine residues in proteins. In Listeria monocytogenes serotype 4b (strain CLIP80459), this protein is Protein-arginine kinase.